The primary structure comprises 474 residues: UDP-glycosyltransferase 71C2 (474 aa).

UDP-alpha-D-glucose contacts are provided by residues Ser-293, 352–354, 369–377, and 391–394; these read APQ, HCGWNSILE, and YAEQ.

The protein belongs to the UDP-glycosyltransferase family.

In terms of biological role, possesses low quercetin 3-O-glucosyltransferase, 7-O-glucosyltransferase and 3'-O-glucosyltransferase activities in vitro. Glucosylates other secondary metabolites in vitro like vanillin, trans-resveratrol, curumin and etoposide. The sequence is that of UDP-glycosyltransferase 71C2 (UGT71C2) from Arabidopsis thaliana (Mouse-ear cress).